The sequence spans 368 residues: 4-hydroxy-3-methylbut-2-en-1-yl diphosphate synthase (flavodoxin) (368 aa).

Positions 271, 274, 306, and 313 each coordinate [4Fe-4S] cluster.

It belongs to the IspG family. [4Fe-4S] cluster is required as a cofactor.

The catalysed reaction is (2E)-4-hydroxy-3-methylbut-2-enyl diphosphate + oxidized [flavodoxin] + H2O + 2 H(+) = 2-C-methyl-D-erythritol 2,4-cyclic diphosphate + reduced [flavodoxin]. It participates in isoprenoid biosynthesis; isopentenyl diphosphate biosynthesis via DXP pathway; isopentenyl diphosphate from 1-deoxy-D-xylulose 5-phosphate: step 5/6. Converts 2C-methyl-D-erythritol 2,4-cyclodiphosphate (ME-2,4cPP) into 1-hydroxy-2-methyl-2-(E)-butenyl 4-diphosphate. The polypeptide is 4-hydroxy-3-methylbut-2-en-1-yl diphosphate synthase (flavodoxin) (Buchnera aphidicola subsp. Acyrthosiphon pisum (strain APS) (Acyrthosiphon pisum symbiotic bacterium)).